A 425-amino-acid polypeptide reads, in one-letter code: MSAHQLPACVIDNGTGYTKLGYAGNTEPQFIIPSAIAVKDKVASSNSQAMRWNNRVGAGIDDLDFFIGDEALSPAATNYTVKYPIRHGIVEDWDLMERYWEQCIFKYLRAEPEDHFFLLTEPPLNTPENREYTAEIMFESFNVPGLYIAVQAVLALTASWNSREANERSLTGLVIDSGDGVTHCIPVADGYVIGSCIKHIPIAGRDITYFIQSLLRDREHTIPAEQSYEVAKMIKEKFCYVCPDVMKEFVKYDTDAAKWLRTYDGINSITKKPFNVDVGYERFLGPEIFFHPEFCNPEFTTPISDTIDTLIQQCPIDVRRGLYENIVLSGGSTMFKDFARKLQRDVKRLSDGRLQMSETLSGGRLKPKPIDVQVISHKMQRYAVWFGGSMLASTSEFYQVSHTKAEYMERGPSICRYNPVFGALT.

Belongs to the actin family. ARP3 subfamily. In terms of assembly, component of the Arp2/3 complex, at least composed of arx-1, arx-2, arx-4 and arx-6.

It localises to the cytoplasm. The protein localises to the cytoskeleton. Functions as ATP-binding component of the Arp2/3 complex which is involved in regulation of actin polymerization and together with an activating nucleation-promoting factor (NPF) mediates the formation of branched actin networks. Seems to contact the pointed end of the daughter actin filament. Plays a role in time-dependent memory loss and the retention of conditioned behavior over time. This chain is Actin-related protein 3, found in Caenorhabditis elegans.